A 199-amino-acid polypeptide reads, in one-letter code: Recombination protein RecR (199 aa).

The C4-type zinc-finger motif lies at 57-72 (CQSCRTFTEETYCPIC). The Toprim domain maps to 81–176 (DIICVVETPA…MVSRIAHGVP (96 aa)).

Belongs to the RecR family.

In terms of biological role, may play a role in DNA repair. It seems to be involved in an RecBC-independent recombinational process of DNA repair. It may act with RecF and RecO. In Shewanella halifaxensis (strain HAW-EB4), this protein is Recombination protein RecR.